Here is a 592-residue protein sequence, read N- to C-terminus: MKTGKIIKVSGPLVVAEGMDEANIYDVCKVGEKGLIGEIIEMRGDKASIQVYEETSGIGPGDPVVTTGEPLSVELGPGLIESMFDGIQRPLDAFMEAAKSSFLTRGVSVPSLNREKKWDFKPTAKVGDDVKSGTVIGTVQETPVVEQRIMIPIGIEGKIKEIKAGSFTVTETIAIVETEKGDREVQLMQKWPVRKGRPYSAKINPVEPMLTGQRVIDTFFPVAKGGAAAIPGPFGAGKTVTQHQIAKWGDAEIVVYVGCGERGNEMTDVVNEFPELIDPKTGESLMKRTVLIANTSNMPVAAREASIYTGITIAEYFRDMGYSVSIMADSTSRWAEALREMSGRLEEMPGDEGYPAYLGSRLADYYERAGKVECLGNDGRIGSITAIGAVSPPGGDISEPVSQSTLRIVKVFWGLDAQLAYQRHFPTINWLTSYSLYADTIDKWMNGNVAENWGALRLEAMTILQDEAQLQEIVRLVGIDALSEKDRLKLDVAKSIREDYLQQNGFHEIDTYTSLKKQYKMLNLILGYRKEAERALEAGVYLNDILAMEDLKDRIARSKYIHEDDLEKMDQIVVDLKNAIDNLINKGGVANA.

An ATP-binding site is contributed by 232-239; sequence GPFGAGKT.

The protein belongs to the ATPase alpha/beta chains family.

The catalysed reaction is ATP + H2O + 4 H(+)(in) = ADP + phosphate + 5 H(+)(out). Produces ATP from ADP in the presence of a proton gradient across the membrane. The V-type alpha chain is a catalytic subunit. The protein is V-type ATP synthase alpha chain of Clostridium botulinum (strain Eklund 17B / Type B).